A 959-amino-acid polypeptide reads, in one-letter code: DNA-directed RNA polymerase subunit beta'' (959 aa).

Cys211, Cys288, Cys295, and Cys298 together coordinate Zn(2+).

The protein belongs to the RNA polymerase beta' chain family. RpoC2 subfamily. As to quaternary structure, in plastids the minimal PEP RNA polymerase catalytic core is composed of four subunits: alpha, beta, beta', and beta''. When a (nuclear-encoded) sigma factor is associated with the core the holoenzyme is formed, which can initiate transcription. Zn(2+) serves as cofactor.

The protein localises to the plastid. It is found in the apicoplast. The catalysed reaction is RNA(n) + a ribonucleoside 5'-triphosphate = RNA(n+1) + diphosphate. In terms of biological role, DNA-dependent RNA polymerase catalyzes the transcription of DNA into RNA using the four ribonucleoside triphosphates as substrates. The polypeptide is DNA-directed RNA polymerase subunit beta'' (Plasmodium falciparum (isolate 3D7)).